The chain runs to 420 residues: Transcription activator GLK1 (420 aa).

Residues 74-152 (GDFSNHMNAS…NRISNNEGKR (79 aa)) form a disordered region. Residues 106-117 (KGEEVVSKRDDV) show a composition bias toward basic and acidic residues. The span at 135–147 (SSSASSKNNRISN) shows a compositional bias: low complexity. A DNA-binding region (myb-like GARP) is located at residues 150 to 209 (GKRKVKVDWTPELHRRFVEAVEQLGVDKAVPSRILELMGVHCLTRHNVASHLQKYRSHRK).

In terms of assembly, interacts with NAC92. Expressed in rosette and cauline leaves. Expressed at low levels in cotyledons and shoots.

It is found in the nucleus. Functionally, transcriptional activator that functions with GLK2 to promote chloroplast development. Acts as an activator of nuclear photosynthetic genes involved in chlorophyll biosynthesis, light harvesting, and electron transport. Acts in a cell-autonomous manner to coordinate and maintain the photosynthetic apparatus within individual cells. May function in photosynthetic capacity optimization by integrating responses to variable environmental and endogenous cues. Prevents premature senescence. The polypeptide is Transcription activator GLK1 (GLK1) (Arabidopsis thaliana (Mouse-ear cress)).